Reading from the N-terminus, the 104-residue chain is Cytochrome c-551 (104 aa).

The N-terminal stretch at 1–22 is a signal peptide; it reads MKKILIPMLALGGALAMQPALA. The heme c site is built by Cys-34, Cys-37, His-38, and Met-83.

In terms of processing, binds 1 heme c group covalently per subunit.

The protein resides in the periplasm. Electron donor for cytochrome cd1 in nitrite and nitrate respiration. This chain is Cytochrome c-551 (nirM), found in Stutzerimonas stutzeri (Pseudomonas stutzeri).